The primary structure comprises 136 residues: MSYHINSSQNRFHKIITTEQLNQVIEAITDGRYSWACVLILRFVGYNPLHFIPQRTYSRLMKDNRQVANIPGSLNNGKSISANSPITNSSVVNKASTQDLNQSNNSDYLTTPEPDKRGNIPGYLETKMAVMYSRNQ.

A compositionally biased stretch (polar residues) spans lysine 94–leucine 109. Positions lysine 94 to isoleucine 120 are disordered.

The protein belongs to the HetP family. In bacterial two-hybrid assays interacts robustly with HetR and Alr3234 and weakly with itself, HetP and Asl1930.

Its function is as follows. Delays heterocyst differentiation and commitment when nitrogen is limiting. Interplay between the 4 HetP paralogs controls the timing of commitment to heterocyst formation and its duration. Epistatic analysis show that the 3 paralogs act upstream of hetP to delay commitment (asl1930, alr3234) or inhibit development (alr2902). Asl1930 and Alr3234 must also attenuate the activity of Alr2902. When only this homolog is present no heterocysts are formed, showing it inhibits development. Ectopic expression partially complements a hetP deletion. This is HetP-like commitment protein Alr2902 from Nostoc sp. (strain PCC 7120 / SAG 25.82 / UTEX 2576).